Reading from the N-terminus, the 58-residue chain is Pepsin-1 (58 aa).

The propeptide at 1 to 41 (LLQVPLEKGQSAREYLQEQGLWEQYRLKYPYNPMAKFDPSF) is activation peptide.

The protein belongs to the peptidase A1 family.

This is Pepsin-1 from Thunnus orientalis (North Pacific bluefin tuna).